We begin with the raw amino-acid sequence, 273 residues long: MESWKGKYASGLRFSFRKRYSTEKGGTVDEDCEVISIGHKIGDISYVSQEEAQQIDQELFNEYAYSVDQLMELAGHSCAVALAKSYPLTSLKKDATVLVCCGPGNNGGDGLVCARHLKMFGYNPSVFYPKRTDKPLYKNLTIQCEQLDIPFLSHLPKPQLLSDGFSYIVDALFGFSFKGEVRPPFGDVLKTLKEVTVPICSIDVPSGWDVEGGNPDGLQPEFLISLTAPKKCAEKFAGRYHYLGGRFVPPGIIQKYELNLPTYPGTEPCIRLH.

The region spanning 52–260 is the YjeF N-terminal domain; the sequence is AQQIDQELFN…GIIQKYELNL (209 aa). Position 105 to 109 (105 to 109) interacts with (6S)-NADPHX; the sequence is NNGGD. K(+)-binding residues include Asn106 and Asp170. (6S)-NADPHX-binding positions include 174 to 180 and Asp203; that span reads GFSFKGE. Residue Ser206 participates in K(+) binding.

This sequence belongs to the NnrE/AIBP family. Requires K(+) as cofactor.

The enzyme catalyses (6R)-NADHX = (6S)-NADHX. It catalyses the reaction (6R)-NADPHX = (6S)-NADPHX. Catalyzes the epimerization of the S- and R-forms of NAD(P)HX, a damaged form of NAD(P)H that is a result of enzymatic or heat-dependent hydration. This is a prerequisite for the S-specific NAD(P)H-hydrate dehydratase to allow the repair of both epimers of NAD(P)HX. In Branchiostoma floridae (Florida lancelet), this protein is NAD(P)H-hydrate epimerase.